We begin with the raw amino-acid sequence, 337 residues long: Hsp90 co-chaperone Cdc37-like 1 (337 aa).

Residues 1–11 are compositionally biased toward pro residues; it reads MEQPWPPPGPW. The interval 1 to 43 is disordered; that stretch reads MEQPWPPPGPWSLPRAEGEAEEESDLDLSPGSPRCPQLPGGGT. The tract at residues 2-171 is self-association; sequence EQPWPPPGPW…HEQKIRHFGM (170 aa). 2 positions are modified to phosphoserine: Ser32 and Ser88. A coiled-coil region spans residues 84–122; that stretch reads HNSESLDQEHAKAQTAISELRQREEEWRQKEEALVQRER. A self-association and interaction with Hsp90 region spans residues 147-277; the sequence is KETEDEDKSK…SRVRLYSQSP (131 aa). Residues 267–337 form an interaction with Hsp70 region; sequence KSRVRLYSQS…DDEPKMMDTV (71 aa). The segment at 278 to 337 is required for interaction with STIP1; that stretch reads NFQPVTVQNHVPHSGVGSIGLLESLPQNPDYLQYSINTALCSLNSVVHKEDDEPKMMDTV.

Belongs to the CDC37 family. As to quaternary structure, self-associates. Forms complexes with Hsp70 and Hsp90. Interacts with CDC37, FKBP4, PPID and STIP1.

The protein resides in the cytoplasm. Functionally, co-chaperone that binds to numerous proteins and promotes their interaction with Hsp70 and Hsp90. In Bos taurus (Bovine), this protein is Hsp90 co-chaperone Cdc37-like 1 (CDC37L1).